A 158-amino-acid chain; its full sequence is Inorganic pyrophosphatase (158 aa).

Glutamate 8 contacts Mg(2+). Substrate is bound by residues lysine 16, arginine 30, and tyrosine 42. Mg(2+)-binding residues include aspartate 52, aspartate 57, aspartate 84, and aspartate 89. Aspartate 89 functions as the Proton acceptor in the catalytic mechanism. Tyrosine 125 is a binding site for substrate.

The protein belongs to the PPase family. As to quaternary structure, homohexamer. It depends on Mg(2+) as a cofactor.

The protein localises to the cytoplasm. It catalyses the reaction diphosphate + H2O = 2 phosphate + H(+). Catalyzes the hydrolysis of inorganic pyrophosphate (PPi) forming two phosphate ions. The sequence is that of Inorganic pyrophosphatase from Corynebacterium glutamicum (strain ATCC 13032 / DSM 20300 / JCM 1318 / BCRC 11384 / CCUG 27702 / LMG 3730 / NBRC 12168 / NCIMB 10025 / NRRL B-2784 / 534).